The sequence spans 184 residues: MDLSGSLLIAMPSMADPRFERSLVLICAHSPDGAMGLVVNKPVEDLSFAGMLEQLNIPRAPNGRDIRVHLGGPMERGRGFVLHSPDYMSVGATMLVSGKFGMTATVDILEALARGQGPSSALMALGYSGWGPGQLEAEVQRNDWLTAEAPSELVFSDDDPGKWTGMLRHMGIDPLTLSSTAGHA.

It belongs to the UPF0301 (AlgH) family.

The sequence is that of UPF0301 protein RHOS4_26140 from Cereibacter sphaeroides (strain ATCC 17023 / DSM 158 / JCM 6121 / CCUG 31486 / LMG 2827 / NBRC 12203 / NCIMB 8253 / ATH 2.4.1.) (Rhodobacter sphaeroides).